The sequence spans 775 residues: Dipeptidyl peptidase 4 (775 aa).

An N-terminal signal peptide occupies residues 1-15 (MKFLSLLLLAGIAQA). N-linked (GlcNAc...) asparagine glycans are attached at residues asparagine 81, asparagine 111, asparagine 170, and asparagine 219. Residues serine 613, aspartate 690, and histidine 725 each act as charge relay system in the active site.

This sequence belongs to the peptidase S9B family.

The protein localises to the secreted. It catalyses the reaction Release of an N-terminal dipeptide, Xaa-Yaa-|-Zaa-, from a polypeptide, preferentially when Yaa is Pro, provided Zaa is neither Pro nor hydroxyproline.. Extracellular dipeptidyl-peptidase which removes N-terminal dipeptides sequentially from polypeptides having unsubstituted N-termini provided that the penultimate residue is proline. Contributes to pathogenicity. This is Dipeptidyl peptidase 4 (DPP4) from Trichophyton equinum (Horse ringworm fungus).